Here is a 476-residue protein sequence, read N- to C-terminus: Adenosylhomocysteinase (476 aa).

Substrate is bound by residues Thr67, Asp142, and Glu202. 203–205 (TTT) is a binding site for NAD(+). Lys232 and Asp236 together coordinate substrate. Residues Asn237, 266 to 271 (GYGDVG), Glu289, Asn324, 345 to 347 (IGH), and Asn390 contribute to the NAD(+) site.

This sequence belongs to the adenosylhomocysteinase family. NAD(+) is required as a cofactor.

It localises to the cytoplasm. It carries out the reaction S-adenosyl-L-homocysteine + H2O = L-homocysteine + adenosine. It participates in amino-acid biosynthesis; L-homocysteine biosynthesis; L-homocysteine from S-adenosyl-L-homocysteine: step 1/1. Its function is as follows. May play a key role in the regulation of the intracellular concentration of adenosylhomocysteine. This Prochlorococcus marinus (strain MIT 9313) protein is Adenosylhomocysteinase.